The chain runs to 417 residues: Gamma-glutamyl phosphate reductase (417 aa).

Belongs to the gamma-glutamyl phosphate reductase family.

It is found in the cytoplasm. It carries out the reaction L-glutamate 5-semialdehyde + phosphate + NADP(+) = L-glutamyl 5-phosphate + NADPH + H(+). The protein operates within amino-acid biosynthesis; L-proline biosynthesis; L-glutamate 5-semialdehyde from L-glutamate: step 2/2. In terms of biological role, catalyzes the NADPH-dependent reduction of L-glutamate 5-phosphate into L-glutamate 5-semialdehyde and phosphate. The product spontaneously undergoes cyclization to form 1-pyrroline-5-carboxylate. The chain is Gamma-glutamyl phosphate reductase from Legionella pneumophila (strain Corby).